We begin with the raw amino-acid sequence, 313 residues long: Porphobilinogen deaminase (313 aa).

S-(dipyrrolylmethanemethyl)cysteine is present on Cys242.

Belongs to the HMBS family. As to quaternary structure, monomer. Requires dipyrromethane as cofactor.

It catalyses the reaction 4 porphobilinogen + H2O = hydroxymethylbilane + 4 NH4(+). Its pathway is porphyrin-containing compound metabolism; protoporphyrin-IX biosynthesis; coproporphyrinogen-III from 5-aminolevulinate: step 2/4. Tetrapolymerization of the monopyrrole PBG into the hydroxymethylbilane pre-uroporphyrinogen in several discrete steps. The polypeptide is Porphobilinogen deaminase (Pseudomonas putida (strain W619)).